Consider the following 70-residue polypeptide: Protein SlyX homolog (70 aa).

The protein belongs to the SlyX family.

This is Protein SlyX homolog from Nitrobacter winogradskyi (strain ATCC 25391 / DSM 10237 / CIP 104748 / NCIMB 11846 / Nb-255).